A 173-amino-acid chain; its full sequence is Orotate phosphoribosyltransferase (173 aa).

Residues Arg-87, Lys-88, Lys-91, and Glu-113–Ser-121 contribute to the 5-phospho-alpha-D-ribose 1-diphosphate site. Positions 117 and 145 each coordinate orotate.

The protein belongs to the purine/pyrimidine phosphoribosyltransferase family. PyrE subfamily. As to quaternary structure, homodimer. Mg(2+) is required as a cofactor.

The catalysed reaction is orotidine 5'-phosphate + diphosphate = orotate + 5-phospho-alpha-D-ribose 1-diphosphate. It participates in pyrimidine metabolism; UMP biosynthesis via de novo pathway; UMP from orotate: step 1/2. Functionally, catalyzes the transfer of a ribosyl phosphate group from 5-phosphoribose 1-diphosphate to orotate, leading to the formation of orotidine monophosphate (OMP). This chain is Orotate phosphoribosyltransferase, found in Natronomonas pharaonis (strain ATCC 35678 / DSM 2160 / CIP 103997 / JCM 8858 / NBRC 14720 / NCIMB 2260 / Gabara) (Halobacterium pharaonis).